A 1253-amino-acid polypeptide reads, in one-letter code: Cytoplasmic FMR1-interacting protein 1 (1253 aa).

S583 is modified (phosphoserine). The interval D724–K732 is EIF4E-binding. T1234 is modified (phosphothreonine).

Belongs to the CYFIP family. In terms of assembly, component of the WAVE1 complex composed of ABI2, CYFIP1 or CYFIP2, BRK1, NCKAP1 and WASF1/WAVE1. Within the complex, a heterodimer containing NCKAP1 and CYFIP1 interacts with a heterotrimer formed by WAVE1, ABI2 and BRK1. Component of the CYFIP1-EIF4E-FMR1 complex which is composed of CYFIP, EIF4E and FMR1. Interacts with FMR1 but does not bind to related proteins FXR1 or FXR2. Interaction with EIF4E stimulates FMR1 binding. Component of the WAVE2 complex composed of ABI1, CYFIP1/SRA1, NCKAP1/NAP1 (NCKAP1L/HEM1 in hematopoietic cells) and WASF2/WAVE2. Interacts with the active GTP-bound form of RAC1. Interacts through its C-terminus with the C-terminus of DPYSL2/CRMP2 which is necessary for DPYSL2-induced axon outgrowth. Interacts with NYAP1, NYAP2 and MYO16. Interacts with TMEM108 (via N-terminus); the interaction associates TMEM108 with the WAVE1 complex. Highly expressed in embryonic and adult developing nervous system.

It localises to the cytoplasm. Its subcellular location is the perinuclear region. The protein localises to the cell projection. It is found in the lamellipodium. The protein resides in the ruffle. It localises to the synapse. Its subcellular location is the synaptosome. Functionally, component of the CYFIP1-EIF4E-FMR1 complex which binds to the mRNA cap and mediates translational repression. In the CYFIP1-EIF4E-FMR1 complex this subunit is an adapter between EIF4E and FMR1. Promotes the translation repression activity of FMR1 in brain probably by mediating its association with EIF4E and mRNA. Regulates formation of membrane ruffles and lamellipodia. Plays a role in axon outgrowth. Binds to F-actin but not to RNA. Part of the WAVE complex that regulates actin filament reorganization via its interaction with the Arp2/3 complex. Actin remodeling activity is regulated by RAC1. Regulator of epithelial morphogenesis. May act as an invasion suppressor in cancers. As component of the WAVE1 complex, required for BDNF-NTRK2 endocytic trafficking and signaling from early endosomes. The sequence is that of Cytoplasmic FMR1-interacting protein 1 from Mus musculus (Mouse).